The following is a 152-amino-acid chain: Large ribosomal subunit protein bL9 (152 aa).

It belongs to the bacterial ribosomal protein bL9 family.

Functionally, binds to the 23S rRNA. In Prochlorococcus marinus (strain SARG / CCMP1375 / SS120), this protein is Large ribosomal subunit protein bL9.